The primary structure comprises 297 residues: Probable endonuclease 4 (297 aa).

His69, His110, Glu145, Asp179, His182, His214, Asp227, His229, and Glu259 together coordinate Zn(2+).

It belongs to the AP endonuclease 2 family. The cofactor is Zn(2+).

The enzyme catalyses Endonucleolytic cleavage to 5'-phosphooligonucleotide end-products.. Functionally, endonuclease IV plays a role in DNA repair. It cleaves phosphodiester bonds at apurinic or apyrimidinic (AP) sites, generating a 3'-hydroxyl group and a 5'-terminal sugar phosphate. This Listeria monocytogenes serotype 4b (strain CLIP80459) protein is Probable endonuclease 4.